The following is a 140-amino-acid chain: Putative pre-16S rRNA nuclease (140 aa).

The protein belongs to the YqgF nuclease family.

Its subcellular location is the cytoplasm. In terms of biological role, could be a nuclease involved in processing of the 5'-end of pre-16S rRNA. This chain is Putative pre-16S rRNA nuclease, found in Mycoplasma pneumoniae (strain ATCC 29342 / M129 / Subtype 1) (Mycoplasmoides pneumoniae).